Consider the following 335-residue polypeptide: Transmembrane protein 120B-A (335 aa).

Positions 1–40 form a coiled coil; it reads MSLQKCQEEWSEIEKEFQQLQETHKVYKQKLEELNSLQNL. The next 6 helical transmembrane spans lie at 100–122, 130–150, 157–177, 193–213, 268–288, and 300–320; these read GLYL…AKFA, FKLY…FVLN, VFNF…SILI, VSTF…YQIF, FLLP…ITLF, and QVFV…LTTL.

It belongs to the TMEM120 family.

The protein localises to the nucleus inner membrane. Functionally, necessary for efficient adipogenesis. Does not show ion channel activity. This Xenopus laevis (African clawed frog) protein is Transmembrane protein 120B-A (tmem120b-a).